The primary structure comprises 261 residues: Methionine aminopeptidase (261 aa).

His-78 contributes to the substrate binding site. The a divalent metal cation site is built by Asp-96, Asp-107, and His-170. Position 177 (His-177) interacts with substrate. Residues Glu-202 and Glu-233 each coordinate a divalent metal cation.

Belongs to the peptidase M24A family. Methionine aminopeptidase type 1 subfamily. In terms of assembly, monomer. Co(2+) serves as cofactor. Zn(2+) is required as a cofactor. It depends on Mn(2+) as a cofactor. Requires Fe(2+) as cofactor.

It carries out the reaction Release of N-terminal amino acids, preferentially methionine, from peptides and arylamides.. Functionally, removes the N-terminal methionine from nascent proteins. The N-terminal methionine is often cleaved when the second residue in the primary sequence is small and uncharged (Met-Ala-, Cys, Gly, Pro, Ser, Thr, or Val). Requires deformylation of the N(alpha)-formylated initiator methionine before it can be hydrolyzed. This Buchnera aphidicola subsp. Schizaphis graminum (strain Sg) protein is Methionine aminopeptidase.